A 499-amino-acid chain; its full sequence is Proline--tRNA ligase (499 aa).

Residues 1–17 show a composition bias toward basic and acidic residues; that stretch reads MTKDGGKKDNQGQDKKA. The disordered stretch occupies residues 1 to 21; it reads MTKDGGKKDNQGQDKKAQQYG.

This sequence belongs to the class-II aminoacyl-tRNA synthetase family. ProS type 3 subfamily. Homodimer.

It is found in the cytoplasm. It carries out the reaction tRNA(Pro) + L-proline + ATP = L-prolyl-tRNA(Pro) + AMP + diphosphate. Functionally, catalyzes the attachment of proline to tRNA(Pro) in a two-step reaction: proline is first activated by ATP to form Pro-AMP and then transferred to the acceptor end of tRNA(Pro). Can inadvertently accommodate and process cysteine. The protein is Proline--tRNA ligase (proS) of Deinococcus radiodurans (strain ATCC 13939 / DSM 20539 / JCM 16871 / CCUG 27074 / LMG 4051 / NBRC 15346 / NCIMB 9279 / VKM B-1422 / R1).